The following is a 2512-amino-acid chain: Fatty acid synthase (2512 aa).

N-acetylglutamate is present on Glu-2. The 405-residue stretch at Glu-2–Pro-406 folds into the Ketosynthase family 3 (KS3) domain. Catalysis depends on for beta-ketoacyl synthase activity residues Cys-161, His-293, and His-331. An acyl and malonyl transferases region spans residues Gly-427–Phe-815. Ser-580 acts as the For acyl/malonyl transferase activity in catalysis. An acyl-CoA is bound by residues Asp-646–Thr-647, Phe-670, and Arg-772. The N-terminal hotdog fold stretch occupies residues Pro-844 to Lys-967. Residues Pro-844–Glu-1111 form the PKS/mFAS DH domain. His-878 serves as the catalytic Proton acceptor; for dehydratase activity. The C-terminal hotdog fold stretch occupies residues Ala-984–Glu-1111. Residue Asp-1034 is the Proton donor; for dehydratase activity of the active site. S-nitrosocysteine is present on Cys-1475. Positions Trp-1638–Gln-1866 are enoyl reductase. Val-1675–Ala-1692 serves as a coordination point for NADP(+). Residue Lys-1708 is modified to N6-(pyridoxal phosphate)lysine. The beta-ketoacyl reductase stretch occupies residues Tyr-1867–Val-2119. Ser-1889–Ala-1904 is an NADP(+) binding site. Position 2093 is an S-nitrosocysteine (Cys-2093). The Carrier domain occupies Lys-2120–Glu-2200. The residue at position 2158 (Ser-2158) is an O-(pantetheine 4'-phosphoryl)serine. A thioesterase region spans residues Lys-2209–Glu-2511. Catalysis depends on for thioesterase activity residues Ser-2309 and His-2482.

As to quaternary structure, homodimer which is arranged in a head to tail fashion. S-nitrosylation of Fatty acid synthase at cysteine residues Cys-1475 or Cys-2093 is important for the enzyme dimerization. In adipocytes, S-nitrosylation of Fatty acid synthase occurs under physiological conditions and gradually increases during adipogenesis.

The enzyme catalyses acetyl-CoA + n malonyl-CoA + 2n NADPH + 2n H(+) = a long-chain fatty acid + (n+1) CoA + n CO2 + 2n NADP(+).. It carries out the reaction holo-[ACP] + acetyl-CoA = acetyl-[ACP] + CoA. It catalyses the reaction holo-[ACP] + malonyl-CoA = malonyl-[ACP] + CoA. The catalysed reaction is a fatty acyl-[ACP] + malonyl-[ACP] + H(+) = a 3-oxoacyl-[ACP] + holo-[ACP] + CO2. The enzyme catalyses a (3R)-hydroxyacyl-[ACP] + NADP(+) = a 3-oxoacyl-[ACP] + NADPH + H(+). It carries out the reaction a (3R)-hydroxyacyl-[ACP] = a (2E)-enoyl-[ACP] + H2O. It catalyses the reaction a 2,3-saturated acyl-[ACP] + NADP(+) = a (2E)-enoyl-[ACP] + NADPH + H(+). The catalysed reaction is hexadecanoyl-[ACP] + H2O = hexadecanoate + holo-[ACP] + H(+). The enzyme catalyses acetyl-[ACP] + malonyl-[ACP] + H(+) = 3-oxobutanoyl-[ACP] + holo-[ACP] + CO2. It carries out the reaction 3-oxobutanoyl-[ACP] + NADPH + H(+) = (3R)-hydroxybutanoyl-[ACP] + NADP(+). It catalyses the reaction (3R)-hydroxybutanoyl-[ACP] = (2E)-butenoyl-[ACP] + H2O. The catalysed reaction is (2E)-butenoyl-[ACP] + NADPH + H(+) = butanoyl-[ACP] + NADP(+). The enzyme catalyses butanoyl-[ACP] + malonyl-[ACP] + H(+) = 3-oxohexanoyl-[ACP] + holo-[ACP] + CO2. It carries out the reaction 3-oxohexanoyl-[ACP] + NADPH + H(+) = (3R)-hydroxyhexanoyl-[ACP] + NADP(+). It catalyses the reaction (3R)-hydroxyhexanoyl-[ACP] = (2E)-hexenoyl-[ACP] + H2O. The catalysed reaction is (2E)-hexenoyl-[ACP] + NADPH + H(+) = hexanoyl-[ACP] + NADP(+). The enzyme catalyses hexanoyl-[ACP] + malonyl-[ACP] + H(+) = 3-oxooctanoyl-[ACP] + holo-[ACP] + CO2. It carries out the reaction 3-oxooctanoyl-[ACP] + NADPH + H(+) = (3R)-hydroxyoctanoyl-[ACP] + NADP(+). It catalyses the reaction (3R)-hydroxyoctanoyl-[ACP] = (2E)-octenoyl-[ACP] + H2O. The catalysed reaction is (2E)-octenoyl-[ACP] + NADPH + H(+) = octanoyl-[ACP] + NADP(+). The enzyme catalyses octanoyl-[ACP] + malonyl-[ACP] + H(+) = 3-oxodecanoyl-[ACP] + holo-[ACP] + CO2. It carries out the reaction 3-oxodecanoyl-[ACP] + NADPH + H(+) = (3R)-hydroxydecanoyl-[ACP] + NADP(+). It catalyses the reaction (3R)-hydroxydecanoyl-[ACP] = (2E)-decenoyl-[ACP] + H2O. The catalysed reaction is (2E)-decenoyl-[ACP] + NADPH + H(+) = decanoyl-[ACP] + NADP(+). The enzyme catalyses decanoyl-[ACP] + malonyl-[ACP] + H(+) = 3-oxododecanoyl-[ACP] + holo-[ACP] + CO2. It carries out the reaction 3-oxododecanoyl-[ACP] + NADPH + H(+) = (3R)-hydroxydodecanoyl-[ACP] + NADP(+). It catalyses the reaction (3R)-hydroxydodecanoyl-[ACP] = (2E)-dodecenoyl-[ACP] + H2O. The catalysed reaction is (2E)-dodecenoyl-[ACP] + NADPH + H(+) = dodecanoyl-[ACP] + NADP(+). The enzyme catalyses dodecanoyl-[ACP] + malonyl-[ACP] + H(+) = 3-oxotetradecanoyl-[ACP] + holo-[ACP] + CO2. It carries out the reaction 3-oxotetradecanoyl-[ACP] + NADPH + H(+) = (3R)-hydroxytetradecanoyl-[ACP] + NADP(+). It catalyses the reaction (3R)-hydroxytetradecanoyl-[ACP] = (2E)-tetradecenoyl-[ACP] + H2O. The catalysed reaction is (2E)-tetradecenoyl-[ACP] + NADPH + H(+) = tetradecanoyl-[ACP] + NADP(+). The enzyme catalyses tetradecanoyl-[ACP] + malonyl-[ACP] + H(+) = 3-oxohexadecanoyl-[ACP] + holo-[ACP] + CO2. It carries out the reaction 3-oxohexadecanoyl-[ACP] + NADPH + H(+) = (3R)-hydroxyhexadecanoyl-[ACP] + NADP(+). It catalyses the reaction (3R)-hydroxyhexadecanoyl-[ACP] = (2E)-hexadecenoyl-[ACP] + H2O. The catalysed reaction is (2E)-hexadecenoyl-[ACP] + NADPH + H(+) = hexadecanoyl-[ACP] + NADP(+). The enzyme catalyses hexadecanoyl-[ACP] + malonyl-[ACP] + H(+) = 3-oxooctadecanoyl-[ACP] + holo-[ACP] + CO2. It carries out the reaction 3-oxooctadecanoyl-[ACP] + NADPH + H(+) = (3R)-hydroxyoctadecanoyl-[ACP] + NADP(+). It catalyses the reaction (3R)-hydroxyoctadecanoyl-[ACP] = (2E)-octadecenoyl-[ACP] + H2O. The catalysed reaction is (2E)-octadecenoyl-[ACP] + NADPH + H(+) = octadecanoyl-[ACP] + NADP(+). The enzyme catalyses tetradecanoyl-[ACP] + H2O = tetradecanoate + holo-[ACP] + H(+). It carries out the reaction octadecanoyl-[ACP] + H2O = octadecanoate + holo-[ACP] + H(+). It functions in the pathway lipid metabolism; fatty acid biosynthesis. With respect to regulation, cerulenin, a potent non-competitive pharmacological inhibitor of FAS, binds covalently to the active site of the condensing enzyme region, inactivating a key enzyme step in fatty acid synthesis. In terms of biological role, fatty acid synthetase is a multifunctional enzyme that catalyzes the de novo biosynthesis of long-chain saturated fatty acids starting from acetyl-CoA and malonyl-CoA in the presence of NADPH. This multifunctional protein contains 7 catalytic activities and a site for the binding of the prosthetic group 4'-phosphopantetheine of the acyl carrier protein ([ACP]) domain. This chain is Fatty acid synthase (FASN), found in Gallus gallus (Chicken).